We begin with the raw amino-acid sequence, 117 residues long: Large ribosomal subunit protein bL20 (117 aa).

The protein belongs to the bacterial ribosomal protein bL20 family.

Its function is as follows. Binds directly to 23S ribosomal RNA and is necessary for the in vitro assembly process of the 50S ribosomal subunit. It is not involved in the protein synthesizing functions of that subunit. The sequence is that of Large ribosomal subunit protein bL20 from Histophilus somni (strain 129Pt) (Haemophilus somnus).